The sequence spans 297 residues: Ribosomal RNA small subunit methyltransferase H (297 aa).

S-adenosyl-L-methionine contacts are provided by residues 37 to 39, Glu-56, Phe-87, Asp-102, and His-109; that span reads GGH.

It belongs to the methyltransferase superfamily. RsmH family.

The protein localises to the cytoplasm. It catalyses the reaction cytidine(1402) in 16S rRNA + S-adenosyl-L-methionine = N(4)-methylcytidine(1402) in 16S rRNA + S-adenosyl-L-homocysteine + H(+). Specifically methylates the N4 position of cytidine in position 1402 (C1402) of 16S rRNA. This chain is Ribosomal RNA small subunit methyltransferase H, found in Borrelia duttonii (strain Ly).